The primary structure comprises 232 residues: tRNA (guanine-N(1)-)-methyltransferase (232 aa).

Residues Gly-114 and Ile-134–Leu-139 each bind S-adenosyl-L-methionine.

Belongs to the RNA methyltransferase TrmD family. Homodimer.

The protein resides in the cytoplasm. It catalyses the reaction guanosine(37) in tRNA + S-adenosyl-L-methionine = N(1)-methylguanosine(37) in tRNA + S-adenosyl-L-homocysteine + H(+). In terms of biological role, specifically methylates guanosine-37 in various tRNAs. This chain is tRNA (guanine-N(1)-)-methyltransferase, found in Wolbachia pipientis subsp. Culex pipiens (strain wPip).